The sequence spans 64 residues: Ferredoxin-2 (64 aa).

A 4Fe-4S ferredoxin-type domain is found at 2–29 (RIHVDQDKCCGAGSCVLAAPDVFDQREE). The [3Fe-4S] cluster site is built by Cys10, Cys16, and Cys55.

[3Fe-4S] cluster is required as a cofactor.

In terms of biological role, electron transport protein for the cytochrome P-450-SU2 system. The polypeptide is Ferredoxin-2 (subB) (Streptomyces griseolus).